Here is a 515-residue protein sequence, read N- to C-terminus: 1-pyrroline-5-carboxylate dehydrogenase (515 aa).

Active-site residues include E286 and C320.

It belongs to the aldehyde dehydrogenase family. RocA subfamily.

It carries out the reaction L-glutamate 5-semialdehyde + NAD(+) + H2O = L-glutamate + NADH + 2 H(+). Its pathway is amino-acid degradation; L-proline degradation into L-glutamate; L-glutamate from L-proline: step 2/2. The polypeptide is 1-pyrroline-5-carboxylate dehydrogenase (Bacillus anthracis (strain A0248)).